The following is a 170-amino-acid chain: Large ribosomal subunit protein uL10 (170 aa).

Belongs to the universal ribosomal protein uL10 family. Part of the ribosomal stalk of the 50S ribosomal subunit. The N-terminus interacts with L11 and the large rRNA to form the base of the stalk. The C-terminus forms an elongated spine to which L12 dimers bind in a sequential fashion forming a multimeric L10(L12)X complex.

Forms part of the ribosomal stalk, playing a central role in the interaction of the ribosome with GTP-bound translation factors. The protein is Large ribosomal subunit protein uL10 of Novosphingobium aromaticivorans (strain ATCC 700278 / DSM 12444 / CCUG 56034 / CIP 105152 / NBRC 16084 / F199).